Consider the following 450-residue polypeptide: 3-keto-steroid reductase erg27 (450 aa).

3 residues coordinate NADP(+): L25, T53, and K59. Residues S215 and Y238 each act as proton donor in the active site. Positions 238, 242, and 296 each coordinate NADP(+). Catalysis depends on K242, which acts as the Lowers pKa of active site Tyr.

Belongs to the short-chain dehydrogenases/reductases (SDR) family. ERG27 subfamily. In terms of assembly, heterotetramer of erg25, erg26, erg27 and erg28. Erg28 acts as a scaffold to tether erg27 and other 4,4-demethylation-related enzymes, forming a demethylation enzyme complex, in the endoplasmic reticulum.

Its subcellular location is the endoplasmic reticulum membrane. It is found in the lipid droplet. It participates in steroid metabolism; ergosterol biosynthesis. Sterol-C4-methyl oxidase; part of the third module of ergosterol biosynthesis pathway that includes the late steps of the pathway. Erg27 is a catalytic component of the C-4 demethylation complex that catalyzes the conversion of 4,4-dimethylfecosterol into fecosterol via 4-methylfecosterol. The third module or late pathway involves the ergosterol synthesis itself through consecutive reactions that mainly occur in the endoplasmic reticulum (ER) membrane. Firstly, the squalene synthase erg9 catalyzes the condensation of 2 farnesyl pyrophosphate moieties to form squalene, which is the precursor of all steroids. Squalene synthase is crucial for balancing the incorporation of farnesyl diphosphate (FPP) into sterol and nonsterol isoprene synthesis. Secondly, squalene is converted into lanosterol by the consecutive action of the squalene epoxidase erg1 and the lanosterol synthase erg7. Then, the delta(24)-sterol C-methyltransferase erg6 methylates lanosterol at C-24 to produce eburicol. Eburicol is the substrate of the sterol 14-alpha demethylase encoded by cyp51A and cyp51B, to yield 4,4,24-trimethyl ergosta-8,14,24(28)-trienol. The C-14 reductase erg24 then reduces the C14=C15 double bond which leads to 4,4-dimethylfecosterol. A sequence of further demethylations at C-4, involving the C-4 demethylation complex containing the C-4 methylsterol oxidases erg25A or erg25B, the sterol-4-alpha-carboxylate 3-dehydrogenase erg26 and the 3-keto-steroid reductase erg27, leads to the production of fecosterol via 4-methylfecosterol. The C-8 sterol isomerase erg2 then catalyzes the reaction which results in unsaturation at C-7 in the B ring of sterols and thus converts fecosterol to episterol. The sterol-C5-desaturase erg3B then catalyzes the introduction of a C-5 double bond in the B ring to produce 5-dehydroepisterol. The 2 other sterol-C5-desaturases, erg3A and erg3C, seem to be less important in ergosterol biosynthesis. The C-22 sterol desaturase erg5 further converts 5-dehydroepisterol into ergosta-5,7,22,24(28)-tetraen-3beta-ol by forming the C-22(23) double bond in the sterol side chain. Finally, ergosta-5,7,22,24(28)-tetraen-3beta-ol is substrate of the C-24(28) sterol reductases erg4A and erg4B to produce ergosterol. Possible alternative sterol biosynthetic pathways might exist from fecosterol to ergosterol, depending on the activities of the erg3 isoforms. The polypeptide is 3-keto-steroid reductase erg27 (Aspergillus fumigatus (strain ATCC MYA-4609 / CBS 101355 / FGSC A1100 / Af293) (Neosartorya fumigata)).